A 488-amino-acid chain; its full sequence is V-type proton ATPase subunit B 1 (488 aa).

The protein belongs to the ATPase alpha/beta chains family. As to quaternary structure, V-ATPase is a heteromultimeric enzyme composed of a peripheral catalytic V1 complex (main components: subunits A, B, C, D, E, and F) attached to an integral membrane V0 proton pore complex (main component: the proteolipid protein).

Its function is as follows. Non-catalytic subunit of the peripheral V1 complex of vacuolar ATPase. V-ATPase is responsible for acidifying a variety of intracellular compartments in eukaryotic cells. This chain is V-type proton ATPase subunit B 1, found in Gossypium hirsutum (Upland cotton).